A 238-amino-acid polypeptide reads, in one-letter code: Sugar fermentation stimulation protein homolog (238 aa).

It belongs to the SfsA family.

The protein is Sugar fermentation stimulation protein homolog of Vibrio vulnificus (strain YJ016).